Reading from the N-terminus, the 252-residue chain is Coenzyme F420:L-glutamate ligase (252 aa).

GTP contacts are provided by residues 11 to 14 (MPLV), 45 to 46 (ET), and K50. Residue D115 participates in a divalent metal cation binding. N118 contacts GTP. A divalent metal cation contacts are provided by D156, T157, and Q214. 212–219 (MGQADEGV) is a GTP binding site.

The protein belongs to the CofE family. In terms of assembly, homodimer. Mg(2+) is required as a cofactor. The cofactor is Mn(2+). It depends on K(+) as a cofactor.

The catalysed reaction is oxidized coenzyme F420-0 + GTP + L-glutamate = oxidized coenzyme F420-1 + GDP + phosphate + H(+). The enzyme catalyses oxidized coenzyme F420-1 + GTP + L-glutamate = oxidized coenzyme F420-2 + GDP + phosphate + H(+). Its pathway is cofactor biosynthesis; coenzyme F420 biosynthesis. Functionally, catalyzes the GTP-dependent successive addition of two or more gamma-linked L-glutamates to the L-lactyl phosphodiester of 7,8-didemethyl-8-hydroxy-5-deazariboflavin (F420-0) to form coenzyme F420-0-glutamyl-glutamate (F420-2) or polyglutamated F420 derivatives. In Methanothermobacter thermautotrophicus (strain ATCC 29096 / DSM 1053 / JCM 10044 / NBRC 100330 / Delta H) (Methanobacterium thermoautotrophicum), this protein is Coenzyme F420:L-glutamate ligase.